The following is a 452-amino-acid chain: Ribosomal protein uS12 methylthiotransferase RimO (452 aa).

The 112-residue stretch at 5–116 (PTIAFSHLGC…IVDVLQRTES (112 aa)) folds into the MTTase N-terminal domain. [4Fe-4S] cluster is bound by residues Cys-14, Cys-50, Cys-79, Cys-154, Cys-158, and Cys-161. The Radical SAM core domain maps to 140–369 (TTTSAVAYLR…MATQQPIAER (230 aa)). One can recognise a TRAM domain in the interval 372–438 (RAQIGRLVDV…IYDLHGEVAS (67 aa)).

Belongs to the methylthiotransferase family. RimO subfamily. The cofactor is [4Fe-4S] cluster.

The protein localises to the cytoplasm. It catalyses the reaction L-aspartate(89)-[ribosomal protein uS12]-hydrogen + (sulfur carrier)-SH + AH2 + 2 S-adenosyl-L-methionine = 3-methylsulfanyl-L-aspartate(89)-[ribosomal protein uS12]-hydrogen + (sulfur carrier)-H + 5'-deoxyadenosine + L-methionine + A + S-adenosyl-L-homocysteine + 2 H(+). Catalyzes the methylthiolation of an aspartic acid residue of ribosomal protein uS12. This is Ribosomal protein uS12 methylthiotransferase RimO from Synechococcus elongatus (strain ATCC 33912 / PCC 7942 / FACHB-805) (Anacystis nidulans R2).